We begin with the raw amino-acid sequence, 496 residues long: L-arabinose isomerase (496 aa).

Mn(2+)-binding residues include glutamate 306, glutamate 331, histidine 348, and histidine 447.

The protein belongs to the arabinose isomerase family. It depends on Mn(2+) as a cofactor.

It catalyses the reaction beta-L-arabinopyranose = L-ribulose. The protein operates within carbohydrate degradation; L-arabinose degradation via L-ribulose; D-xylulose 5-phosphate from L-arabinose (bacterial route): step 1/3. In terms of biological role, catalyzes the conversion of L-arabinose to L-ribulose. The polypeptide is L-arabinose isomerase (Geobacillus kaustophilus (strain HTA426)).